The following is a 265-amino-acid chain: Small ribosomal subunit protein uS5 (265 aa).

Residues 1-25 are compositionally biased toward low complexity; that stretch reads MADTTTAAQADQKPTRAFGAGRPQR. The tract at residues 1 to 49 is disordered; the sequence is MADTTTAAQADQKPTRAFGAGRPQRGAGGAPQRGGPRPQRGGQGETKSW. At alanine 2 the chain carries N-acetylalanine. An S5 DRBM domain is found at 89–152; it reads LKDEVMKIVP…VAAKLSVIPV (64 aa).

This sequence belongs to the universal ribosomal protein uS5 family.

Component of the ribosome, a large ribonucleoprotein complex responsible for the synthesis of proteins in the cell. The small ribosomal subunit (SSU) binds messenger RNAs (mRNAs) and translates the encoded message by selecting cognate aminoacyl-transfer RNA (tRNA) molecules. The large subunit (LSU) contains the ribosomal catalytic site termed the peptidyl transferase center (PTC), which catalyzes the formation of peptide bonds, thereby polymerizing the amino acids delivered by tRNAs into a polypeptide chain. The nascent polypeptides leave the ribosome through a tunnel in the LSU and interact with protein factors that function in enzymatic processing, targeting, and the membrane insertion of nascent chains at the exit of the ribosomal tunnel. Plays a role in the assembly and function of the 40S ribosomal subunit. Mutations in this protein affects the control of translational fidelity. Involved in nucleolar processing of pre-18S ribosomal RNA and ribosome assembly. In Dictyostelium discoideum (Social amoeba), this protein is Small ribosomal subunit protein uS5 (rps2).